A 526-amino-acid chain; its full sequence is Na(+)/H(+) antiporter NhaB (526 aa).

Helical transmembrane passes span 25–45 (ILLF…AAGW), 52–72 (IFTL…LLAI), 89–109 (LVAN…IYFM), 130–164 (LSLA…FYAI), 204–224 (LMMH…VGEP), 242–262 (IRMA…CILV), 305–325 (AVIA…VGLI), 350–370 (QEAL…AVII), 391–411 (LALF…VFVG), 448–468 (VATP…LAPL), 479–499 (MALP…ELLL), and 505–525 (WFYQ…LPAL).

This sequence belongs to the NhaB Na(+)/H(+) (TC 2.A.34) antiporter family.

It is found in the cell inner membrane. It catalyses the reaction 2 Na(+)(in) + 3 H(+)(out) = 2 Na(+)(out) + 3 H(+)(in). Its function is as follows. Na(+)/H(+) antiporter that extrudes sodium in exchange for external protons. The protein is Na(+)/H(+) antiporter NhaB of Aeromonas salmonicida (strain A449).